The chain runs to 694 residues: PTS system fructose-specific EIIABC component (694 aa).

The PTS EIIA type-2 domain maps to 4 to 149 (PLLSAELFFN…NGLINLIDSF (146 aa)). The Tele-phosphohistidine intermediate; for EIIA activity role is filled by His68. His68 carries the post-translational modification Phosphohistidine; by HPr. Positions 179–275 (FVAVTACPTG…PQTVYDQVVK (97 aa)) constitute a PTS EIIB type-2 domain. Cys185 (phosphocysteine intermediate; for EIIB activity) is an active-site residue. Position 185 is a phosphocysteine; by EIIA (Cys185). Positions 310–687 (IYRAILSGVS…NLLVVRKKTK (378 aa)) constitute a PTS EIIC type-2 domain. The next 10 membrane-spanning stretches (helical) occupy residues 318 to 338 (VSYMLPFVVFGGILIAIAFLI), 364 to 384 (GGLSFGLIVPILSAYIAFALV), 390 to 410 (LPGFIVGLISAGKFLLNIDIV), 422 to 442 (VSSGFFGAIFGGLLAAVLIIV), 461 to 481 (ILFIPLLGTLVTAALFWVINI), 502 to 522 (LAPLLGLVIGLMMCFDLGGPV), 542 to 562 (VAMASAILSGMVPPLGIAIAA), 576 to 596 (AAYACYVMGLSFISEGAIPFV), 602 to 622 (IMLAANLIGGAVCGVLTGAFA), and 655 to 675 (GVGLALLALIVSSFISAGIII).

The protein resides in the cell membrane. It carries out the reaction D-fructose(out) + N(pros)-phospho-L-histidyl-[protein] = D-fructose 1-phosphate(in) + L-histidyl-[protein]. Functionally, the phosphoenolpyruvate-dependent sugar phosphotransferase system (sugar PTS), a major carbohydrate active transport system, catalyzes the phosphorylation of incoming sugar substrates concomitantly with their translocation across the cell membrane. This system is involved in fructose transport. The chain is PTS system fructose-specific EIIABC component from Mycoplasma pneumoniae (strain ATCC 29342 / M129 / Subtype 1) (Mycoplasmoides pneumoniae).